A 158-amino-acid polypeptide reads, in one-letter code: Transcriptional repressor NrdR (158 aa).

Residues 3-34 fold into a zinc finger; it reads CPFCNSEETRVIDTRLTDDGHVVRRRRECEHC. In terms of domain architecture, ATP-cone spans 49-139; that stretch reads IFVVKKGGQR…VYKEFRDLDH (91 aa).

Belongs to the NrdR family. Zn(2+) serves as cofactor.

In terms of biological role, negatively regulates transcription of bacterial ribonucleotide reductase nrd genes and operons by binding to NrdR-boxes. In Kosmotoga olearia (strain ATCC BAA-1733 / DSM 21960 / TBF 19.5.1), this protein is Transcriptional repressor NrdR.